Reading from the N-terminus, the 423-residue chain is Adenylosuccinate synthetase (423 aa).

Residues 12 to 18 (GDEGKGK) and 40 to 42 (GHT) each bind GTP. The Proton acceptor role is filled by aspartate 13. Positions 13 and 40 each coordinate Mg(2+). IMP is bound by residues 13–16 (DEGK), 38–41 (NAGH), threonine 128, arginine 142, glutamine 223, threonine 238, and arginine 302. The Proton donor role is filled by histidine 41. Residue 298–304 (TTTGRPR) coordinates substrate. GTP-binding positions include arginine 304, 330–332 (RLD), and 412–414 (CIG).

This sequence belongs to the adenylosuccinate synthetase family. As to quaternary structure, homodimer. Mg(2+) is required as a cofactor.

It is found in the cytoplasm. The catalysed reaction is IMP + L-aspartate + GTP = N(6)-(1,2-dicarboxyethyl)-AMP + GDP + phosphate + 2 H(+). It participates in purine metabolism; AMP biosynthesis via de novo pathway; AMP from IMP: step 1/2. In terms of biological role, plays an important role in the de novo pathway of purine nucleotide biosynthesis. Catalyzes the first committed step in the biosynthesis of AMP from IMP. The protein is Adenylosuccinate synthetase of Dehalococcoides mccartyi (strain ATCC BAA-2266 / KCTC 15142 / 195) (Dehalococcoides ethenogenes (strain 195)).